Here is a 325-residue protein sequence, read N- to C-terminus: Delta(1)-pyrroline-2-carboxylate reductase (325 aa).

Belongs to the ornithine cyclodeaminase/mu-crystallin family.

The catalysed reaction is L-proline + NAD(+) = 1-pyrroline-2-carboxylate + NADH + H(+). It catalyses the reaction L-proline + NADP(+) = 1-pyrroline-2-carboxylate + NADPH + H(+). In terms of biological role, catalyzes the reduction of Delta(1)-pyrroline-2-carboxylate (Pyr2C) to L-proline, using preferentially NADPH over NADH as the electron donor. Is likely involved in a degradation pathway that converts trans-3-hydroxy-L-proline (t3LHyp) to L-proline. The chain is Delta(1)-pyrroline-2-carboxylate reductase from Bacillus thuringiensis subsp. konkukian (strain 97-27).